The primary structure comprises 76 residues: Cytochrome c oxidase subunit 6C-1 (76 aa).

The Mitochondrial matrix segment spans residues 4-14 (GALLPKPQMHD). The chain crosses the membrane as a helical span at residues 15–55 (PLSKRLWVHIVGAFIVDLGVAAAHKFGAAKPRKKAYADFYR). Over 56 to 76 (NHDPMKDFDEMRKAGVFRSVK) the chain is Mitochondrial intermembrane.

It belongs to the cytochrome c oxidase subunit 6c family. In terms of assembly, component of the cytochrome c oxidase (complex IV, CIV), a multisubunit enzyme composed of 14 subunits. The complex is composed of a catalytic core of 3 subunits MT-CO1, MT-CO2 and MT-CO3, encoded in the mitochondrial DNA, and 11 supernumerary subunits COX4I, COX5A, COX5B, COX6A, COX6B, COX6C, COX7A, COX7B, COX7C, COX8 and NDUFA4, which are encoded in the nuclear genome. The complex exists as a monomer or a dimer and forms supercomplexes (SCs) in the inner mitochondrial membrane with NADH-ubiquinone oxidoreductase (complex I, CI) and ubiquinol-cytochrome c oxidoreductase (cytochrome b-c1 complex, complex III, CIII), resulting in different assemblies (supercomplex SCI(1)III(2)IV(1) and megacomplex MCI(2)III(2)IV(2)).

Its subcellular location is the mitochondrion inner membrane. It participates in energy metabolism; oxidative phosphorylation. Component of the cytochrome c oxidase, the last enzyme in the mitochondrial electron transport chain which drives oxidative phosphorylation. The respiratory chain contains 3 multisubunit complexes succinate dehydrogenase (complex II, CII), ubiquinol-cytochrome c oxidoreductase (cytochrome b-c1 complex, complex III, CIII) and cytochrome c oxidase (complex IV, CIV), that cooperate to transfer electrons derived from NADH and succinate to molecular oxygen, creating an electrochemical gradient over the inner membrane that drives transmembrane transport and the ATP synthase. Cytochrome c oxidase is the component of the respiratory chain that catalyzes the reduction of oxygen to water. Electrons originating from reduced cytochrome c in the intermembrane space (IMS) are transferred via the dinuclear copper A center (CU(A)) of subunit 2 and heme A of subunit 1 to the active site in subunit 1, a binuclear center (BNC) formed by heme A3 and copper B (CU(B)). The BNC reduces molecular oxygen to 2 water molecules using 4 electrons from cytochrome c in the IMS and 4 protons from the mitochondrial matrix. The polypeptide is Cytochrome c oxidase subunit 6C-1 (Cox6c1) (Rattus norvegicus (Rat)).